Here is a 104-residue protein sequence, read N- to C-terminus: Large ribosomal subunit protein bL21 (104 aa).

The protein belongs to the bacterial ribosomal protein bL21 family. As to quaternary structure, part of the 50S ribosomal subunit. Contacts protein L20.

Functionally, this protein binds to 23S rRNA in the presence of protein L20. This chain is Large ribosomal subunit protein bL21, found in Pseudomonas putida (strain GB-1).